The primary structure comprises 470 residues: Aldehyde dehydrogenase family 3 comG (470 aa).

196–201 (GSVKVG) contacts NAD(+). Active-site residues include glutamate 218 and cysteine 252.

It belongs to the aldehyde dehydrogenase family.

It localises to the cytoplasm. The catalysed reaction is an aldehyde + NADP(+) + H2O = a carboxylate + NADPH + 2 H(+). It carries out the reaction an aldehyde + NAD(+) + H2O = a carboxylate + NADH + 2 H(+). The polypeptide is Aldehyde dehydrogenase family 3 comG (comG) (Dictyostelium discoideum (Social amoeba)).